We begin with the raw amino-acid sequence, 1294 residues long: uncharacterized protein (1294 aa).

This is an uncharacterized protein from Schizosaccharomyces pombe (strain 972 / ATCC 24843) (Fission yeast).